A 77-amino-acid polypeptide reads, in one-letter code: NAD(P)H-quinone oxidoreductase subunit L (77 aa).

A run of 2 helical transmembrane segments spans residues 12 to 32 and 47 to 67; these read LIAY…LLFY and LGIY…SPFL.

The protein belongs to the complex I NdhL subunit family. In terms of assembly, NDH-1 can be composed of about 15 different subunits; different subcomplexes with different compositions have been identified which probably have different functions.

Its subcellular location is the cellular thylakoid membrane. The catalysed reaction is a plastoquinone + NADH + (n+1) H(+)(in) = a plastoquinol + NAD(+) + n H(+)(out). The enzyme catalyses a plastoquinone + NADPH + (n+1) H(+)(in) = a plastoquinol + NADP(+) + n H(+)(out). In terms of biological role, NDH-1 shuttles electrons from an unknown electron donor, via FMN and iron-sulfur (Fe-S) centers, to quinones in the respiratory and/or the photosynthetic chain. The immediate electron acceptor for the enzyme in this species is believed to be plastoquinone. Couples the redox reaction to proton translocation, and thus conserves the redox energy in a proton gradient. Cyanobacterial NDH-1 also plays a role in inorganic carbon-concentration. The polypeptide is NAD(P)H-quinone oxidoreductase subunit L (Prochlorococcus marinus (strain AS9601)).